The chain runs to 498 residues: Germ cell-less protein-like 2 (498 aa).

The Nuclear localization signal motif lies at 33–39; sequence SRKRKRN. Positions 90–160 constitute a BTB domain; it reads SDIKIRALGR…LYTDADLSIT (71 aa).

Interacts with CUL3.

It localises to the nucleus matrix. It functions in the pathway protein modification; protein ubiquitination. Its function is as follows. Possible function in spermatogenesis. Probable substrate-specific adapter of an E3 ubiquitin-protein ligase complex which mediates the ubiquitination and subsequent proteasomal degradation of target proteins. In Mus musculus (Mouse), this protein is Germ cell-less protein-like 2 (Gmcl2).